Reading from the N-terminus, the 150-residue chain is Large ribosomal subunit protein uL15 (150 aa).

Residues 1–57 (MSLTLQSLKPQKGARRRKMRKGRGIAAGQGASCGFGMRGQKSRSGRPTRPGFEGGQM) form a disordered region. Residues 12–23 (KGARRRKMRKGR) are compositionally biased toward basic residues. Residues 25 to 37 (IAAGQGASCGFGM) show a composition bias toward gly residues.

This sequence belongs to the universal ribosomal protein uL15 family. In terms of assembly, part of the 50S ribosomal subunit.

In terms of biological role, binds to the 23S rRNA. The protein is Large ribosomal subunit protein uL15 of Synechococcus sp. (strain RCC307).